A 347-amino-acid polypeptide reads, in one-letter code: MAEPDSVNEAKEKKKKLWKAVFAISGIMLTLVIYGLLQEKIMRVPYGLKKEYFKHSLFLVFCNRLTTSAVSAAALLASKKVLDPVAPVYKYCLISVTNILTTTCQYEALKYVSFPVQTLAKCAKMIPVMVWGTLIMQKKYRGFDYLVAFLVTLGCSVFILFPAGDDISPYNKGRENTVWGVSLMVGYLGFDGFTSTFQDKLFKGYNMEIHNQIFYTTICSSILSFTGLILQGHLLPAVDFVSRHRDCLFDIALLSTVATASQFFISYTIRTFGALTFAAIMTTRQLASIMLSCIWFSHPLSWEQCIGSVIVFGSLYAKTFVKKKSEKPPAAQELPRDEEAQPLKGNP.

The next 8 helical transmembrane spans lie at 17–37 (LWKAVFAISGIMLTLVIYGLL), 57–77 (LFLVFCNRLTTSAVSAAALLA), 116–136 (VQTLAKCAKMIPVMVWGTLIM), 143–163 (FDYLVAFLVTLGCSVFILFPA), 177–197 (TVWGVSLMVGYLGFDGFTSTF), 218–238 (ICSSILSFTGLILQGHLLPAV), 247–267 (CLFDIALLSTVATASQFFISY), and 293–313 (CIWFSHPLSWEQCIGSVIVFG). The tract at residues 325-347 (SEKPPAAQELPRDEEAQPLKGNP) is disordered.

It belongs to the nucleotide-sugar transporter family. UDP-galactose:UMP antiporter (TC 2.A.7.11) subfamily.

Its subcellular location is the membrane. In terms of biological role, sugar transporter involved in the transport of nucleotide-sugars from cytoplasm into the Golgi and/or the endoplasmic reticulum. This is UDP-galactose/UDP-glucose transporter 5 from Arabidopsis thaliana (Mouse-ear cress).